We begin with the raw amino-acid sequence, 730 residues long: Envelope glycoprotein H (730 aa).

Residues 1-21 form the signal peptide; the sequence is MQGLAFLAALACWRCISLTCG. The Virion surface segment spans residues 22-706; it reads ATGALPTTAT…MYRRRAASAL (685 aa). 15 N-linked (GlcNAc...) asparagine; by host glycosylation sites follow: Asn-46, Asn-54, Asn-101, Asn-125, Asn-131, Asn-188, Asn-209, Asn-215, Asn-267, Asn-274, Asn-365, Asn-556, Asn-613, Asn-626, and Asn-688. The segment at 190-254 is interaction with gL; the sequence is SGVALYGVVS…RNAKYALVAI (65 aa). A helical membrane pass occupies residues 707–727; it reads FLILSFIGFSGVIYFLYRLFS. The Intravirion portion of the chain corresponds to 728-730; the sequence is ILY.

It belongs to the herpesviridae glycoprotein H family. In terms of assembly, interacts with glycoprotein L (gL); this interaction is necessary for the correct processing and cell surface expression of gH. The heterodimer gH/gL seems to interact with gB trimers during fusion. When in complex with gL, interacts with host EPHA2; this interaction triggers EPHA2 phosphorylation and endocytosis allowing KSHV entry. In terms of processing, N-glycosylated, O-glycosylated, and sialylated.

It is found in the virion membrane. The protein localises to the host cell membrane. Its subcellular location is the host endosome membrane. Its function is as follows. The heterodimer glycoprotein H-glycoprotein L is required for the fusion of viral and plasma membranes leading to virus entry into the host cell. Following initial binding to host receptor, membrane fusion is mediated by the fusion machinery composed of gB and the heterodimer gH/gL. May also be involved in the fusion between the virion envelope and the outer nuclear membrane during virion morphogenesis. Targets host EPHA2 to promote KSHV entry. This Homo sapiens (Human) protein is Envelope glycoprotein H.